A 428-amino-acid chain; its full sequence is Probable protein phosphatase 2C 5 (428 aa).

Positions 25–297 (RSEKVEKPFV…DDTTCVVVDI (273 aa)) constitute a PPM-type phosphatase domain. Mn(2+) is bound by residues D73, G74, D249, and D288.

Belongs to the PP2C family. The cofactor is Mg(2+). Requires Mn(2+) as cofactor.

The enzyme catalyses O-phospho-L-seryl-[protein] + H2O = L-seryl-[protein] + phosphate. It catalyses the reaction O-phospho-L-threonyl-[protein] + H2O = L-threonyl-[protein] + phosphate. The sequence is that of Probable protein phosphatase 2C 5 from Arabidopsis thaliana (Mouse-ear cress).